Here is a 1513-residue protein sequence, read N- to C-terminus: DNA-directed RNA polymerase subunit beta'' (1513 aa).

4 residues coordinate Zn(2+): cysteine 220, cysteine 296, cysteine 303, and cysteine 306. Residues 644 to 769 form a disordered region; it reads RTREKDSENE…EYGNPEEDSV (126 aa). A compositionally biased stretch (basic and acidic residues) spans 659–679; that stretch reads NEYRTREEECKTLEDEYRTRE. A compositionally biased stretch (acidic residues) spans 680 to 707; the sequence is EEYETLEDEYGIPENEYETLEDEYGILE. Positions 726 to 737 are enriched in basic and acidic residues; it reads NKYRPREDKYGT. A compositionally biased stretch (acidic residues) spans 738 to 767; it reads LEEDSEDEHGTLEEDSEEDSEDEYGNPEED.

Belongs to the RNA polymerase beta' chain family. RpoC2 subfamily. In plastids the minimal PEP RNA polymerase catalytic core is composed of four subunits: alpha, beta, beta', and beta''. When a (nuclear-encoded) sigma factor is associated with the core the holoenzyme is formed, which can initiate transcription. Requires Zn(2+) as cofactor.

It is found in the plastid. It localises to the chloroplast. The catalysed reaction is RNA(n) + a ribonucleoside 5'-triphosphate = RNA(n+1) + diphosphate. In terms of biological role, DNA-dependent RNA polymerase catalyzes the transcription of DNA into RNA using the four ribonucleoside triphosphates as substrates. This chain is DNA-directed RNA polymerase subunit beta'', found in Oryza sativa (Rice).